The following is a 454-amino-acid chain: Phosphoglucosamine mutase (454 aa).

Residue Ser-101 is the Phosphoserine intermediate of the active site. Positions 101, 243, 245, and 247 each coordinate Mg(2+). A Phosphoserine modification is found at Ser-101.

This sequence belongs to the phosphohexose mutase family. Requires Mg(2+) as cofactor. Activated by phosphorylation.

It catalyses the reaction alpha-D-glucosamine 1-phosphate = D-glucosamine 6-phosphate. In terms of biological role, catalyzes the conversion of glucosamine-6-phosphate to glucosamine-1-phosphate. This Geobacter sp. (strain M21) protein is Phosphoglucosamine mutase.